The sequence spans 415 residues: uncharacterized protein (415 aa).

[4Fe-4S] cluster contacts are provided by Cys85, Cys91, Cys94, and Cys175. Residues Gln248, Tyr276, Glu297, and Asn344 each contribute to the S-adenosyl-L-methionine site. Catalysis depends on Cys371, which acts as the Nucleophile.

It belongs to the class I-like SAM-binding methyltransferase superfamily. RNA M5U methyltransferase family.

This is an uncharacterized protein from Leptospira interrogans serogroup Icterohaemorrhagiae serovar Lai (strain 56601).